We begin with the raw amino-acid sequence, 239 residues long: Enolase-phosphatase E1 (239 aa).

The protein belongs to the HAD-like hydrolase superfamily. MasA/MtnC family. Monomer. Mg(2+) is required as a cofactor.

It carries out the reaction 5-methylsulfanyl-2,3-dioxopentyl phosphate + H2O = 1,2-dihydroxy-5-(methylsulfanyl)pent-1-en-3-one + phosphate. It functions in the pathway amino-acid biosynthesis; L-methionine biosynthesis via salvage pathway; L-methionine from S-methyl-5-thio-alpha-D-ribose 1-phosphate: step 3/6. It participates in amino-acid biosynthesis; L-methionine biosynthesis via salvage pathway; L-methionine from S-methyl-5-thio-alpha-D-ribose 1-phosphate: step 4/6. Its function is as follows. Bifunctional enzyme that catalyzes the enolization of 2,3-diketo-5-methylthiopentyl-1-phosphate (DK-MTP-1-P) into the intermediate 2-hydroxy-3-keto-5-methylthiopentenyl-1-phosphate (HK-MTPenyl-1-P), which is then dephosphorylated to form the acireductone 1,2-dihydroxy-3-keto-5-methylthiopentene (DHK-MTPene). This is Enolase-phosphatase E1 from Streptomyces avermitilis (strain ATCC 31267 / DSM 46492 / JCM 5070 / NBRC 14893 / NCIMB 12804 / NRRL 8165 / MA-4680).